The chain runs to 528 residues: GMP synthase [glutamine-hydrolyzing] (528 aa).

The Glutamine amidotransferase type-1 domain maps to 13-204 (AIVILDFGSQ…VYHICGCEPD (192 aa)). Cys90 acts as the Nucleophile in catalysis. Active-site residues include His178 and Glu180. The region spanning 205–403 (WTTTAFIEEA…LGLPEEIVRR (199 aa)) is the GMPS ATP-PPase domain. 232–238 (SGGVDSS) contributes to the ATP binding site.

In terms of assembly, homodimer.

The enzyme catalyses XMP + L-glutamine + ATP + H2O = GMP + L-glutamate + AMP + diphosphate + 2 H(+). It participates in purine metabolism; GMP biosynthesis; GMP from XMP (L-Gln route): step 1/1. Catalyzes the synthesis of GMP from XMP. In Prochlorococcus marinus (strain MIT 9303), this protein is GMP synthase [glutamine-hydrolyzing].